Consider the following 471-residue polypeptide: Putative multidrug resistance protein MdtD (471 aa).

Over 1 to 11 the chain is Periplasmic; that stretch reads MTDLPDSTRWQ. The chain crosses the membrane as a helical span at residues 12–32; it reads LWIVAFGFFMQSLDTTIVNTA. Residues 33 to 48 are Cytoplasmic-facing; that stretch reads LPSMAQSLGESPLHMH. A helical transmembrane segment spans residues 49–69; sequence MVIVSYVLTVAVMLPASGWLA. Residues 70–76 are Periplasmic-facing; that stretch reads DKVGVRN. Residues 77–97 traverse the membrane as a helical segment; that stretch reads IFFTAIVLFTLGSLFCALSAT. Topologically, residues 98 to 101 are cytoplasmic; that stretch reads LNEL. Residues 102–124 form a helical membrane-spanning segment; it reads LLARALQGVGGAMMVPVGRLTVM. Residues 125–137 lie on the Periplasmic side of the membrane; it reads KIVPREQYMAAMT. The helical transmembrane segment at 138 to 158 threads the bilayer; the sequence is FVTLPGQVGPLLGPALGGLLV. At 159 to 164 the chain is on the cytoplasmic side; the sequence is EYASWH. Residues 165 to 185 traverse the membrane as a helical segment; it reads WIFLINIPVGIIGAIATLMLM. Residues 186-196 are Periplasmic-facing; the sequence is PNYTMQTRRFD. Residues 197-217 traverse the membrane as a helical segment; it reads LSGFLLLAVGMAVLTLALDGS. Residues 218–224 are Cytoplasmic-facing; that stretch reads KGTGLSP. A helical membrane pass occupies residues 225-245; that stretch reads LAIAGLAAIGVVALVLYLLHA. At 246 to 262 the chain is on the periplasmic side; that stretch reads RNNNRALFSLKLFRTRT. A helical transmembrane segment spans residues 263 to 283; the sequence is FSLGLAGSFAGRIGSGMLPFM. Over 284-285 the chain is Cytoplasmic; it reads TP. The chain crosses the membrane as a helical span at residues 286–306; sequence VFLQIGLGFSPFHAGLMMIPM. At 307 to 341 the chain is on the periplasmic side; it reads VLGSMGMKRIVVQVVNRFGYRRVLVATTLGLSLVT. The chain crosses the membrane as a helical span at residues 342 to 362; that stretch reads LLFMTTALLGWYYVLPFVLFL. Topologically, residues 363-395 are cytoplasmic; the sequence is QGMVNSTRFSSMNTLTLKDLPDNLASSGNSLLS. Residues 396-416 form a helical membrane-spanning segment; sequence MIMQLSMSIGVTIAGLLLGLF. Topologically, residues 417–430 are periplasmic; that stretch reads GSQHVSVDSSTTQT. Residues 431–451 form a helical membrane-spanning segment; the sequence is VFMYTWLSMALIIALPAFIFA. Over 452–471 the chain is Cytoplasmic; the sequence is RVPNDTHQNVAISRRKRSAQ.

The protein belongs to the major facilitator superfamily. TCR/Tet family.

The protein resides in the cell inner membrane. This Escherichia fergusonii (strain ATCC 35469 / DSM 13698 / CCUG 18766 / IAM 14443 / JCM 21226 / LMG 7866 / NBRC 102419 / NCTC 12128 / CDC 0568-73) protein is Putative multidrug resistance protein MdtD.